A 571-amino-acid polypeptide reads, in one-letter code: Origin recognition complex subunit 5 (571 aa).

Disordered regions lie at residues 90-142 (DDEY…YDDD) and 404-430 (QIYP…GRQL). Composition is skewed to low complexity over residues 107-133 (NNNN…NNND) and 407-416 (PPQQVPQQQK). Residues 417-428 (QQEKEKEKEKGR) are compositionally biased toward basic and acidic residues.

The protein belongs to the ORC1 family. ORC is composed of six subunits.

The protein localises to the nucleus. Functionally, component of the origin recognition complex (ORC) that binds origins of replication. DNA-binding is ATP-dependent, however specific DNA sequences that define origins of replication have not been identified so far. ORC is required to assemble the pre-replication complex necessary to initiate DNA replication. This is Origin recognition complex subunit 5 (orcE) from Dictyostelium discoideum (Social amoeba).